Here is a 215-residue protein sequence, read N- to C-terminus: Adenylate kinase (215 aa).

An ATP-binding site is contributed by 10–15 (GAGKGT). The tract at residues 30 to 59 (STGDMFRAAIKEGTELGKQAKALMDQGKLV) is NMP. AMP contacts are provided by residues Thr-31, Arg-36, 57–59 (KLV), 85–88 (GFPR), and Gln-92. The LID stretch occupies residues 122–159 (GRRVHQPSGRTYHIIYNPPKVAGQDDITGEELITRADD). ATP contacts are provided by residues Arg-123 and 132–133 (TY). AMP is bound by residues Arg-156 and Arg-167. Residue Lys-200 coordinates ATP.

Belongs to the adenylate kinase family. As to quaternary structure, monomer.

It localises to the cytoplasm. The enzyme catalyses AMP + ATP = 2 ADP. Its pathway is purine metabolism; AMP biosynthesis via salvage pathway; AMP from ADP: step 1/1. Its function is as follows. Catalyzes the reversible transfer of the terminal phosphate group between ATP and AMP. Plays an important role in cellular energy homeostasis and in adenine nucleotide metabolism. The polypeptide is Adenylate kinase (Haemophilus ducreyi (strain 35000HP / ATCC 700724)).